Consider the following 553-residue polypeptide: ATP synthase F(1) complex subunit alpha, mitochondrial (553 aa).

Residues Met-1–Leu-43 constitute a mitochondrion transit peptide. Ser-53 and Ser-65 each carry phosphoserine. Residue Ser-76 is modified to Phosphoserine; alternate. O-linked (GlcNAc) serine; alternate glycosylation occurs at Ser-76. Ser-106 bears the Phosphoserine mark. 3 positions are modified to N6-acetyllysine: Lys-123, Lys-126, and Lys-132. Position 134 is a phosphothreonine (Thr-134). Lys-161 is subject to N6-acetyllysine; alternate. An N6-succinyllysine; alternate modification is found at Lys-161. Ser-166 carries the post-translational modification Phosphoserine. Lys-167 is subject to N6-acetyllysine; alternate. Lys-167 carries the post-translational modification N6-succinyllysine; alternate. Phosphoserine is present on Ser-184. The residue at position 204 (Arg-204) is an Omega-N-methylarginine. ATP-binding residues include Gln-215, Gly-217, Lys-218, Thr-219, and Ser-220. Thr-219 is a binding site for Mg(2+). 2 positions are modified to N6-acetyllysine; alternate: Lys-230 and Lys-239. An N6-succinyllysine; alternate mark is found at Lys-230 and Lys-239. Lys-240 is modified (N6-acetyllysine). 2 positions are modified to N6-acetyllysine; alternate: Lys-261 and Lys-305. N6-succinyllysine; alternate is present on residues Lys-261 and Lys-305. Asp-312 contacts Mg(2+). Lys-427 bears the N6-acetyllysine; alternate mark. At Lys-427 the chain carries N6-succinyllysine; alternate. Lys-434 bears the N6-acetyllysine mark. 2 residues coordinate ATP: Gln-473 and Gln-475. An N6-acetyllysine; alternate mark is found at Lys-498 and Lys-506. 2 positions are modified to N6-succinyllysine; alternate: Lys-498 and Lys-506. The residue at position 521 (Ser-521) is a Phosphoserine. Residues Lys-531 and Lys-539 each carry the N6-acetyllysine; alternate modification. N6-succinyllysine; alternate occurs at positions 531 and 539. Lys-541 carries the post-translational modification N6-acetyllysine.

This sequence belongs to the ATPase alpha/beta chains family. In terms of assembly, homotrimer. Component of the ATP synthase complex composed at least of ATP5F1A/subunit alpha, ATP5F1B/subunit beta, ATP5MC1/subunit c (homooctomer), MT-ATP6/subunit a, MT-ATP8/subunit 8, ATP5ME/subunit e, ATP5MF/subunit f, ATP5MG/subunit g, ATP5MK/subunit k, ATP5MJ/subunit j, ATP5F1C/subunit gamma, ATP5F1D/subunit delta, ATP5F1E/subunit epsilon, ATP5PF/subunit F6, ATP5PB/subunit b, ATP5PD/subunit d, ATP5PO/subunit OSCP. ATP synthase complex consists of a soluble F(1) head domain (subunits alpha(3) and beta(3)) - the catalytic core - and a membrane F(0) domain - the membrane proton channel (subunits c, a, 8, e, f, g, k and j). These two domains are linked by a central stalk (subunits gamma, delta, and epsilon) rotating inside the F1 region and a stationary peripheral stalk (subunits F6, b, d, and OSCP). Interacts with ATPAF2. Interacts with HRG; the interaction occurs on the surface of T-cells and alters the cell morphology when associated with concanavalin (in vitro). Interacts with PLG (angiostatin peptide); the interaction inhibits most of the angiogenic properties of angiostatin. Interacts with BLOC1S1. Interacts with BCL2L1 isoform BCL-X(L); the interaction mediates the association of BCL2L1 isoform BCL-X(L) with the mitochondrial membrane F(1)F(0) ATP synthase and enhances neurons metabolic efficiency. Interacts with CLN5 and PPT1. Interacts with S100A1; this interaction increases F1-ATPase activity. Interacts with ABCB7; this interaction allows the regulation of cellular iron homeostasis and cellular reactive oxygen species (ROS) levels in cardiomyocytes. In terms of processing, acetylated on lysine residues. BLOC1S1 is required for acetylation. Acetylation of Lys-132, Lys-230 and Lys-498 is observed in liver mitochondria from fasted mice but not from fed mice.

It localises to the mitochondrion inner membrane. It is found in the cell membrane. Functionally, subunit alpha, of the mitochondrial membrane ATP synthase complex (F(1)F(0) ATP synthase or Complex V) that produces ATP from ADP in the presence of a proton gradient across the membrane which is generated by electron transport complexes of the respiratory chain. ATP synthase complex consist of a soluble F(1) head domain - the catalytic core - and a membrane F(1) domain - the membrane proton channel. These two domains are linked by a central stalk rotating inside the F(1) region and a stationary peripheral stalk. During catalysis, ATP synthesis in the catalytic domain of F(1) is coupled via a rotary mechanism of the central stalk subunits to proton translocation. In vivo, can only synthesize ATP although its ATP hydrolase activity can be activated artificially in vitro. With the catalytic subunit beta (ATP5F1B), forms the catalytic core in the F(1) domain. Subunit alpha does not bear the catalytic high-affinity ATP-binding sites. In Mus musculus (Mouse), this protein is ATP synthase F(1) complex subunit alpha, mitochondrial.